We begin with the raw amino-acid sequence, 374 residues long: Probable quinol oxidase subunit 2 (374 aa).

Positions 1-19 (MSKFKSLLLMFGTLILLSG) are cleaved as a signal peptide. C20 carries N-palmitoyl cysteine lipidation. C20 carries S-diacylglycerol cysteine lipidation. A run of 2 helical transmembrane segments spans residues 43-63 (SIIF…IFIF) and 82-102 (IETI…IPTV). Residues 321-374 (MKPMILGNNDPYDNEFKKEEDHNSKEMEKISKSAKDENASKFGSKADNDHGGGH) are disordered. The span at 334–374 (NEFKKEEDHNSKEMEKISKSAKDENASKFGSKADNDHGGGH) shows a compositional bias: basic and acidic residues.

This sequence belongs to the cytochrome c oxidase subunit 2 family.

It localises to the cell membrane. It catalyses the reaction 2 a quinol + O2 = 2 a quinone + 2 H2O. Its function is as follows. Catalyzes quinol oxidation with the concomitant reduction of oxygen to water. Subunit II transfers the electrons from a quinol to the binuclear center of the catalytic subunit I. This chain is Probable quinol oxidase subunit 2 (qoxA), found in Staphylococcus haemolyticus (strain JCSC1435).